Here is a 235-residue protein sequence, read N- to C-terminus: Protein shisa-5 (235 aa).

Positions 1–26 (MAAPAPSLWTLLLLLLLLPPPPGAHG) are cleaved as a signal peptide. Residues 27-105 (ELCRPFGEDN…SSFDSDPMSG (79 aa)) are Extracellular-facing. Residues 106–126 (FGATVAIGVTIFVVFIATIII) form a helical membrane-spanning segment. At 127–235 (CFTCSCCCLY…TYMDSLKTIP (109 aa)) the chain is on the cytoplasmic side. The tract at residues 157–235 (APYPQPQPQP…TYMDSLKTIP (79 aa)) is disordered. Composition is skewed to pro residues over residues 159-172 (YPQP…PSYP) and 181-211 (PMPP…PPPY).

Belongs to the shisa family. Interacts with PDCD6; PDCD6 can stabilize SHISA5. Spleen and thymus.

The protein localises to the endoplasmic reticulum membrane. Its subcellular location is the nucleus membrane. In terms of biological role, can induce apoptosis in a caspase-dependent manner and plays a role in p53/TP53-dependent apoptosis. In Mus musculus (Mouse), this protein is Protein shisa-5 (Shisa5).